Here is a 372-residue protein sequence, read N- to C-terminus: Lipoyl synthase, mitochondrial (372 aa).

The N-terminal 27 residues, 1–27 (MSLRCGGAVRTVGPRVFGRYVFSPVRE), are a transit peptide targeting the mitochondrion. The [4Fe-4S] cluster site is built by Cys-106, Cys-111, Cys-117, Cys-137, Cys-141, Cys-144, and Ser-352. The Radical SAM core domain occupies 122-341 (EYATATATIM…EKVGNELGFH (220 aa)).

It belongs to the radical SAM superfamily. Lipoyl synthase family. [4Fe-4S] cluster is required as a cofactor.

It is found in the mitochondrion. It carries out the reaction [[Fe-S] cluster scaffold protein carrying a second [4Fe-4S](2+) cluster] + N(6)-octanoyl-L-lysyl-[protein] + 2 oxidized [2Fe-2S]-[ferredoxin] + 2 S-adenosyl-L-methionine + 4 H(+) = [[Fe-S] cluster scaffold protein] + N(6)-[(R)-dihydrolipoyl]-L-lysyl-[protein] + 4 Fe(3+) + 2 hydrogen sulfide + 2 5'-deoxyadenosine + 2 L-methionine + 2 reduced [2Fe-2S]-[ferredoxin]. Its pathway is protein modification; protein lipoylation via endogenous pathway; protein N(6)-(lipoyl)lysine from octanoyl-[acyl-carrier-protein]: step 2/2. Catalyzes the radical-mediated insertion of two sulfur atoms into the C-6 and C-8 positions of the octanoyl moiety bound to the lipoyl domains of lipoate-dependent enzymes, thereby converting the octanoylated domains into lipoylated derivatives. In Bos taurus (Bovine), this protein is Lipoyl synthase, mitochondrial.